The sequence spans 65 residues: Disintegrin CC8B (65 aa).

One can recognise a Disintegrin domain in the interval 1 to 65; the sequence is NSAHPCCDPV…DCPRNPWHKS (65 aa). 4 disulfide bridges follow: Cys6/Cys29, Cys20/Cys26, Cys25/Cys50, and Cys38/Cys57. A Cell attachment site; atypical (WGD) motif is present at residues 42–44; sequence WGD.

Belongs to the disintegrin family. Dimeric disintegrin subfamily. In terms of assembly, heterodimer with CC8A; disulfide-linked. Expressed by the venom gland.

It localises to the secreted. Its function is as follows. Inhibits integrins alpha-IIb/beta-3 (ITGA2B/ITGB3), alpha-V/beta-3 (ITGAV/ITGB3), and alpha-5/beta-1 (ITGA5/ITGB1). The sequence is that of Disintegrin CC8B from Cerastes cerastes (Horned desert viper).